The primary structure comprises 271 residues: Cell surface glycoprotein CD200 receptor 2 (271 aa).

Positions 1–23 (MSAPRLLISIIIMVSASSSSCMG) are cleaved as a signal peptide. Topologically, residues 24–239 (GKQMTQNYST…TSGSPALSLL (216 aa)) are extracellular. N-linked (GlcNAc...) asparagine glycans are attached at residues Asn-30, Asn-39, Asn-86, Asn-92, Asn-189, and Asn-217. The 87-residue stretch at 46-132 (MDINAVLCCP…YRGIVVTPDG (87 aa)) folds into the Ig-like V-type domain. Residues 133 to 221 (NFHRGYHLQV…SHLTGNKSLS (89 aa)) enclose the Ig-like C2-type domain. Residues Cys-160 and Cys-209 are joined by a disulfide bond. A helical transmembrane segment spans residues 240–260 (IILYVKLSLFVVILVTTGFVF). The Cytoplasmic segment spans residues 261–271 (FQRINHVRKVL).

Belongs to the CD200R family.

The protein localises to the membrane. Its function is as follows. May be a receptor for the CD200/OX2 cell surface glycoprotein. The sequence is that of Cell surface glycoprotein CD200 receptor 2 (CD200R1L) from Homo sapiens (Human).